A 155-amino-acid polypeptide reads, in one-letter code: RNA pyrophosphohydrolase (155 aa).

The Nudix hydrolase domain occupies 5 to 147 (RYRPNVAAIV…KRPVYKKVLE (143 aa)). Positions 42-63 (GGIDKGESPKEALLRELKEEIG) match the Nudix box motif.

It belongs to the Nudix hydrolase family. RppH subfamily. It depends on a divalent metal cation as a cofactor.

Functionally, accelerates the degradation of transcripts by removing pyrophosphate from the 5'-end of triphosphorylated RNA, leading to a more labile monophosphorylated state that can stimulate subsequent ribonuclease cleavage. This is RNA pyrophosphohydrolase from Nitratiruptor sp. (strain SB155-2).